The chain runs to 500 residues: Probable malate:quinone oxidoreductase (500 aa).

It belongs to the MQO family. FAD serves as cofactor.

It catalyses the reaction (S)-malate + a quinone = a quinol + oxaloacetate. It functions in the pathway carbohydrate metabolism; tricarboxylic acid cycle; oxaloacetate from (S)-malate (quinone route): step 1/1. The chain is Probable malate:quinone oxidoreductase from Corynebacterium aurimucosum (strain ATCC 700975 / DSM 44827 / CIP 107346 / CN-1) (Corynebacterium nigricans).